The following is a 567-amino-acid chain: Hexose transporter HXT9 (567 aa).

Residues 1–16 (MSGVNNTSANDLSTTE) show a composition bias toward polar residues. A disordered region spans residues 1-45 (MSGVNNTSANDLSTTESNSNSVANAPSVKTEHNDSKNSLNLDATE). At 1–56 (MSGVNNTSANDLSTTESNSNSVANAPSVKTEHNDSKNSLNLDATEPPIDLPQKPLS) the chain is on the cytoplasmic side. A compositionally biased stretch (low complexity) spans 17–28 (SNSNSVANAPSV). A helical transmembrane segment spans residues 57–77 (AYTTVAILCLMIAFGGFIFGW). Residues 78-112 (DTGTISGFVNLSDFIRRFGQKNDKGTYYLSKVRMG) are Extracellular-facing. A glycan (N-linked (GlcNAc...) asparagine) is linked at N87. The chain crosses the membrane as a helical span at residues 113 to 133 (LIVSIFNIGCAIGGIVLSKVG). The Cytoplasmic portion of the chain corresponds to 134–139 (DIYGRR). A helical membrane pass occupies residues 140–160 (IGLITVTAIYVVGILIQITSI). Residues 161–170 (NKWYQYFIGR) lie on the Extracellular side of the membrane. A helical transmembrane segment spans residues 171-191 (IISGLGVGGIAVLSPMLISEV). Over 192 to 197 (APKQIR) the chain is Cytoplasmic. Residues 198 to 218 (GTLVQLYQLMCTMGIFLGYCT) form a helical membrane-spanning segment. The Extracellular portion of the chain corresponds to 219 to 232 (NYGTKNYHNATQWR). N227 carries N-linked (GlcNAc...) asparagine glycosylation. Residues 233 to 253 (VGLGLCFAWTTFMVSGMMFVP) form a helical membrane-spanning segment. At 254-336 (ESPRYLIEVG…IQSLQQLTGD (83 aa)) the chain is on the cytoplasmic side. A helical membrane pass occupies residues 337 to 353 (NYFFYYGTTIFKSVGLK). At 354–359 (DSFQTS) the chain is on the extracellular side. A helical membrane pass occupies residues 360–377 (IIIGVVNFFSSFIAVYTI). At 378–384 (ERFGRRT) the chain is on the cytoplasmic side. A helical transmembrane segment spans residues 385–405 (CLLWGAASMLCCFAVFASVGV). The Extracellular portion of the chain corresponds to 406-429 (TKLWPQGSSHQDITSQGAGNCMIV). A helical membrane pass occupies residues 430–450 (FTMFFIFSFATTWAGGCYVIV). The Cytoplasmic segment spans residues 451–467 (SETFPLRVKSRGMAIAT). The chain crosses the membrane as a helical span at residues 468-488 (AANWMWGFLISFFTPFITGAI). Residue N489 is a topological domain, extracellular. A helical transmembrane segment spans residues 490 to 510 (FYYGYVFLGCLVFAYFYVFFF). The Cytoplasmic segment spans residues 511–567 (VPETKGLTLEEVNTMWLEGVPAWKSASWVPPERRTADYDADAIDHDDRPIYKRFFSS).

It belongs to the major facilitator superfamily. Sugar transporter (TC 2.A.1.1) family.

Its subcellular location is the membrane. In terms of biological role, probable glucose transporter. The polypeptide is Hexose transporter HXT9 (HXT9) (Saccharomyces cerevisiae (strain ATCC 204508 / S288c) (Baker's yeast)).